Consider the following 222-residue polypeptide: TPR repeat-containing protein BH2049 (222 aa).

TPR repeat units lie at residues 34–67 (AEPL…NREH) and 169–202 (PVGL…KEDK).

This Halalkalibacterium halodurans (strain ATCC BAA-125 / DSM 18197 / FERM 7344 / JCM 9153 / C-125) (Bacillus halodurans) protein is TPR repeat-containing protein BH2049.